The following is a 326-amino-acid chain: Ribosomal RNA small subunit methyltransferase H (326 aa).

S-adenosyl-L-methionine is bound by residues 45 to 47 (GGH), aspartate 65, aspartate 113, and glutamine 120. The tract at residues 299-326 (PSAEEITRNPRSRSARLRAAERIAHDGR) is disordered. Basic and acidic residues predominate over residues 316–326 (RAAERIAHDGR).

It belongs to the methyltransferase superfamily. RsmH family.

It is found in the cytoplasm. The enzyme catalyses cytidine(1402) in 16S rRNA + S-adenosyl-L-methionine = N(4)-methylcytidine(1402) in 16S rRNA + S-adenosyl-L-homocysteine + H(+). Its function is as follows. Specifically methylates the N4 position of cytidine in position 1402 (C1402) of 16S rRNA. The polypeptide is Ribosomal RNA small subunit methyltransferase H (Thermomicrobium roseum (strain ATCC 27502 / DSM 5159 / P-2)).